Reading from the N-terminus, the 511-residue chain is Coatomer subunit delta (511 aa).

Positions Gln-168–Gly-177 are enriched in basic and acidic residues. Residues Gln-168–Ser-188 are disordered. Ser-223 is subject to Phosphoserine. Residues Lys-233 and Lys-241 each carry the N6-acetyllysine modification. Phosphoserine is present on Ser-244. In terms of domain architecture, MHD spans Met-271–Leu-511. N6-acetyllysine is present on residues Lys-309 and Lys-351. Ser-493 carries the post-translational modification Phosphoserine.

The protein belongs to the adaptor complexes medium subunit family. Delta-COP subfamily. In terms of assembly, oligomeric complex that consists of at least the alpha, beta, beta', gamma, delta, epsilon and zeta subunits. Ubiquitously expressed.

The protein resides in the cytoplasm. It is found in the golgi apparatus membrane. The protein localises to the cytoplasmic vesicle. Its subcellular location is the COPI-coated vesicle membrane. Functionally, component of the coatomer, a cytosolic protein complex that binds to dilysine motifs and reversibly associates with Golgi non-clathrin-coated vesicles, which further mediate biosynthetic protein transport from the ER, via the Golgi up to the trans Golgi network. The coatomer complex is required for budding from Golgi membranes, and is essential for the retrograde Golgi-to-ER transport of dilysine-tagged proteins. In mammals, the coatomer can only be recruited by membranes associated to ADP-ribosylation factors (ARFs), which are small GTP-binding proteins; the complex also influences the Golgi structural integrity, as well as the processing, activity, and endocytic recycling of LDL receptors. In Homo sapiens (Human), this protein is Coatomer subunit delta (ARCN1).